The following is a 141-amino-acid chain: Hemoglobin subunit alpha-A (141 aa).

A Globin domain is found at 1-141 (VLSAADKTNV…VSTVLTAKYR (141 aa)). H58 is an O2 binding site. H87 lines the heme b pocket.

The protein belongs to the globin family. Heterotetramer of two alpha chains and two beta chains. In terms of tissue distribution, red blood cells.

Involved in oxygen transport from the lung to the various peripheral tissues. This Eudynamys scolopaceus (Western koel) protein is Hemoglobin subunit alpha-A (HBAA).